The primary structure comprises 122 residues: MKSLKIKKGDRVKVIAGNDKGAIGEVLSVDPARERVVVEGVNIRKHHRRDMPTPQGGTTKGGIISSEAPIHVSNVQLVTKIDGKDVVTRVGYRRVDVTKRRPDGSEYAAQRSVRYLKKEEAK.

Residues 43-64 (IRKHHRRDMPTPQGGTTKGGII) are disordered.

This sequence belongs to the universal ribosomal protein uL24 family. Part of the 50S ribosomal subunit.

In terms of biological role, one of two assembly initiator proteins, it binds directly to the 5'-end of the 23S rRNA, where it nucleates assembly of the 50S subunit. One of the proteins that surrounds the polypeptide exit tunnel on the outside of the subunit. This is Large ribosomal subunit protein uL24 from Cutibacterium acnes (strain DSM 16379 / KPA171202) (Propionibacterium acnes).